A 175-amino-acid polypeptide reads, in one-letter code: MVRLRETEVILRLCIVFFILLSSCLIGLDSQTKEIAYIHKKVSFRYLLALEAELYINVVVAAYNLVQIGLGWYNVEQKTSNPKWFSYLLDQTAAYVVFAGTSAAAQHSLLVVTGSRELQWMKWCYKFTRFCFQMGSAIILNYIAAALMVLLSSISAFNLFRLYSPKRFFSFKSSS.

The Cytoplasmic portion of the chain corresponds to 1-7 (MVRLRET). Residues 8-28 (EVILRLCIVFFILLSSCLIGL) traverse the membrane as a helical segment. The Extracellular segment spans residues 29 to 51 (DSQTKEIAYIHKKVSFRYLLALE). A helical transmembrane segment spans residues 52–72 (AELYINVVVAAYNLVQIGLGW). Topologically, residues 73 to 91 (YNVEQKTSNPKWFSYLLDQ) are cytoplasmic. Residues 92-112 (TAAYVVFAGTSAAAQHSLLVV) traverse the membrane as a helical segment. Topologically, residues 113 to 136 (TGSRELQWMKWCYKFTRFCFQMGS) are extracellular. The chain crosses the membrane as a helical span at residues 137–157 (AIILNYIAAALMVLLSSISAF). Over 158–175 (NLFRLYSPKRFFSFKSSS) the chain is Cytoplasmic.

The protein belongs to the Casparian strip membrane proteins (CASP) family. Homodimer and heterodimers.

The protein resides in the cell membrane. The chain is CASP-like protein 2C1 from Arabidopsis lyrata subsp. lyrata (Lyre-leaved rock-cress).